Here is a 179-residue protein sequence, read N- to C-terminus: Large ribosomal subunit protein uL5 (179 aa).

Belongs to the universal ribosomal protein uL5 family. Part of the 50S ribosomal subunit; part of the 5S rRNA/L5/L18/L25 subcomplex. Contacts the 5S rRNA and the P site tRNA. Forms a bridge to the 30S subunit in the 70S ribosome.

Its function is as follows. This is one of the proteins that bind and probably mediate the attachment of the 5S RNA into the large ribosomal subunit, where it forms part of the central protuberance. In the 70S ribosome it contacts protein S13 of the 30S subunit (bridge B1b), connecting the 2 subunits; this bridge is implicated in subunit movement. Contacts the P site tRNA; the 5S rRNA and some of its associated proteins might help stabilize positioning of ribosome-bound tRNAs. The polypeptide is Large ribosomal subunit protein uL5 (Cellvibrio japonicus (strain Ueda107) (Pseudomonas fluorescens subsp. cellulosa)).